Consider the following 360-residue polypeptide: Archaemetzincin-2 (360 aa).

Histidine 254 is a Zn(2+) binding site. Glutamate 255 serves as the catalytic Proton acceptor. Zn(2+)-binding residues include histidine 258, histidine 264, cysteine 265, cysteine 270, cysteine 289, and cysteine 292.

The protein belongs to the peptidase M54 family. Zn(2+) serves as cofactor.

Functionally, probable zinc metalloprotease. This is Archaemetzincin-2 (AMZ2) from Pongo abelii (Sumatran orangutan).